We begin with the raw amino-acid sequence, 252 residues long: GPI alpha-1,4-mannosyltransferase I, stabilizing subunit (252 aa).

Positions 1 to 22 are cleaved as a signal peptide; sequence MAASALAWLLLWAAGLVGRLAA. N-linked (GlcNAc...) asparagine glycans are attached at residues N97 and N209. A helical transmembrane segment spans residues 225–245; that stretch reads VCSVTLLITVLCSTLILLAVF.

The protein belongs to the PIGX family. In terms of assembly, part of the glycosylphosphatidylinositol-mannosyltransferase I complex that is composed of PIGM and PIGX. Interacts with PIGM; PIGX stabilizes PIGM.

The protein localises to the endoplasmic reticulum membrane. Its pathway is glycolipid biosynthesis; glycosylphosphatidylinositol-anchor biosynthesis. Stabilizing subunit of the glycosylphosphatidylinositol-mannosyltransferase I complex which catalyzes the transfer of the first mannose, via an alpha-1,4 bond from a dolichol-phosphate-mannose (Dol-P-Man) to the glucosaminyl acyl phosphatidylinositol (GlcN-(acyl)PI) intermediate to generate alpha-D-Man-(1-&gt;4)-alpha-D-GlcN-(1-&gt;6)-(1-radyl,2-acyl-sn-glycero-3-phospho)-2-acyl-inositol and participates in the sixth step of the glycosylphosphatidylinositol-anchor biosynthesis. Probably acts by stabilizing the mannosyltransferase PIGM. In Rattus norvegicus (Rat), this protein is GPI alpha-1,4-mannosyltransferase I, stabilizing subunit.